The sequence spans 151 residues: Putative pre-16S rRNA nuclease (151 aa).

This sequence belongs to the YqgF nuclease family.

It is found in the cytoplasm. In terms of biological role, could be a nuclease involved in processing of the 5'-end of pre-16S rRNA. The polypeptide is Putative pre-16S rRNA nuclease (Paraburkholderia phymatum (strain DSM 17167 / CIP 108236 / LMG 21445 / STM815) (Burkholderia phymatum)).